The chain runs to 570 residues: Interleukin-1 receptor accessory protein (570 aa).

A signal peptide spans 1–20; it reads MTLLWCVVSLYFYGILQSDA. Ig-like C2-type domains are found at residues 21–128, 141–230, and 242–348; these read SERC…VAFP, PMKL…RTLT, and PPVI…AKVK. The Extracellular segment spans residues 21–367; that stretch reads SERCDDWGLD…VELACGFGAT (347 aa). 5 disulfide bridges follow: Cys-24/Cys-122, Cys-47/Cys-114, Cys-137/Cys-181, Cys-160/Cys-212, and Cys-266/Cys-332. Residue Asn-57 is glycosylated (N-linked (GlcNAc...) asparagine). The interval 69–85 is essential for interaction with PTPRD; sequence IWYWTRQDRDLEEPINF. 3 N-linked (GlcNAc...) asparagine glycosylation sites follow: Asn-107, Asn-111, and Asn-118. 3 N-linked (GlcNAc...) asparagine glycosylation sites follow: Asn-196, Asn-209, and Asn-299. Residues 368–388 form a helical membrane-spanning segment; sequence VLLVVILIVVYHVYWLEMVLF. Topologically, residues 389–570 are cytoplasmic; sequence YRAHFGTDET…GLSYSSLKNV (182 aa). The TIR domain maps to 403-546; sequence KEYDIYVSYA…RFWKQLQVAM (144 aa). The active site involves Glu-482. Residues 549–570 form a disordered region; sequence KKSPRRSSSDEQGLSYSSLKNV. Phosphoserine is present on Ser-557. The span at 558 to 570 shows a compositional bias: polar residues; it reads DEQGLSYSSLKNV.

The protein belongs to the interleukin-1 receptor family. In terms of assembly, the interleukin-36 receptor complex is a heterodimer of IL1RL2 and IL1RAP; the association is inhibited by IL36RN. The interleukin-1 receptor complex is a heterodimer of IL1R1 and IL1RAP. Associates with IL1R2 to form a non-signaling interleukin-1 receptor complex. Isoform 4 interacts with IL1R1 in an interleukin-1-dependent manner. Interacts with IL-33-bound IL1RL1 to form the minimal interleukin-33 signaling complex with a 1:1:1 stoichiometry. Interacts with KIT (independently of stimulation with KITLG/SCF). A mast cell-specific KITLG/SCF-induced interleukin-33 signaling complex contains IL1RL1, IL1RAP, KIT and MYD88. Interacts (via the first immunoglobilin domain) with PTPRD (via the third immunoglobilin domain); induces pre- and postsynaptic differentiation of neurons. Detected in liver, skin, placenta, thymus and lung. Isoform 4 is predominantly expressed in brain. Overexpressed on candidate chronic myeloid leukemia (CML) stem cells, hematopoietic stem cells and mononuclear cells of patients with acute myeloid leukemia (AML). Overexpressed in patients with chronic obstructive pulmonary disease (COPD). Expressed in T-helper 1 (Th1) and T-helper 2 (Th2) cell subsets.

It is found in the cell membrane. The protein resides in the secreted. The catalysed reaction is NAD(+) + H2O = ADP-D-ribose + nicotinamide + H(+). Coreceptor for IL1RL2 in the IL-36 signaling system. Coreceptor with IL1R1 in the IL-1 signaling system. Associates with IL1R1 bound to IL1B to form the high affinity interleukin-1 receptor complex which mediates interleukin-1-dependent activation of NF-kappa-B and other pathways. Signaling involves the recruitment of adapter molecules such as TOLLIP, MYD88, and IRAK1 or IRAK2 via the respective TIR domains of the receptor/coreceptor subunits. Recruits TOLLIP to the signaling complex. Does not bind to interleukin-1 alone; binding of IL1RN to IL1R1, prevents its association with IL1R1 to form a signaling complex. The cellular response is modulated through a non-signaling association with the membrane IL1R2 decoy receptor. Coreceptor for IL1RL1 in the IL-33 signaling system. Can bidirectionally induce pre- and postsynaptic differentiation of neurons by trans-synaptically binding to PTPRD. May play a role in IL1B-mediated costimulation of IFNG production from T-helper 1 (Th1) cells. Its function is as follows. Associates with secreted ligand-bound IL1R2 and increases the affinity of secreted IL1R2 for IL1B; this complex formation may be the dominant mechanism for neutralization of IL1B by secreted/soluble receptors. Enhances the ability of secreted IL1R1 to inhibit IL-33 signaling. In terms of biological role, unable to mediate canonical IL-1 signaling. Required for Src phosphorylation by IL1B. May be involved in IL1B-potentiated NMDA-induced calcium influx in neurons. The chain is Interleukin-1 receptor accessory protein (IL1RAP) from Homo sapiens (Human).